The primary structure comprises 151 residues: 3-hydroxyacyl-[acyl-carrier-protein] dehydratase FabZ (151 aa).

Histidine 56 is an active-site residue.

Belongs to the thioester dehydratase family. FabZ subfamily.

The protein localises to the cytoplasm. The catalysed reaction is a (3R)-hydroxyacyl-[ACP] = a (2E)-enoyl-[ACP] + H2O. Involved in unsaturated fatty acids biosynthesis. Catalyzes the dehydration of short chain beta-hydroxyacyl-ACPs and long chain saturated and unsaturated beta-hydroxyacyl-ACPs. The chain is 3-hydroxyacyl-[acyl-carrier-protein] dehydratase FabZ from Rhodopseudomonas palustris (strain BisB18).